The primary structure comprises 134 residues: Phosphoribosyl-AMP cyclohydrolase (134 aa).

A Mg(2+)-binding site is contributed by Asp-80. Residue Cys-81 coordinates Zn(2+). Asp-82 and Asp-84 together coordinate Mg(2+). Residues Cys-98 and Cys-105 each coordinate Zn(2+).

This sequence belongs to the PRA-CH family. As to quaternary structure, homodimer. Mg(2+) serves as cofactor. It depends on Zn(2+) as a cofactor.

It is found in the cytoplasm. It catalyses the reaction 1-(5-phospho-beta-D-ribosyl)-5'-AMP + H2O = 1-(5-phospho-beta-D-ribosyl)-5-[(5-phospho-beta-D-ribosylamino)methylideneamino]imidazole-4-carboxamide. It functions in the pathway amino-acid biosynthesis; L-histidine biosynthesis; L-histidine from 5-phospho-alpha-D-ribose 1-diphosphate: step 3/9. Its function is as follows. Catalyzes the hydrolysis of the adenine ring of phosphoribosyl-AMP. This is Phosphoribosyl-AMP cyclohydrolase from Janthinobacterium sp. (strain Marseille) (Minibacterium massiliensis).